The following is a 238-amino-acid chain: Small ribosomal subunit protein uS2c (238 aa).

This sequence belongs to the universal ribosomal protein uS2 family.

It is found in the plastid. The protein localises to the chloroplast. In Nuphar advena (Common spatterdock), this protein is Small ribosomal subunit protein uS2c (rps2).